Consider the following 299-residue polypeptide: 4-hydroxy-tetrahydrodipicolinate synthase (299 aa).

Thr-44 provides a ligand contact to pyruvate. Tyr-133 acts as the Proton donor/acceptor in catalysis. Lys-162 (schiff-base intermediate with substrate) is an active-site residue. A pyruvate-binding site is contributed by Ile-204.

The protein belongs to the DapA family. Homotetramer; dimer of dimers.

It is found in the cytoplasm. The enzyme catalyses L-aspartate 4-semialdehyde + pyruvate = (2S,4S)-4-hydroxy-2,3,4,5-tetrahydrodipicolinate + H2O + H(+). The protein operates within amino-acid biosynthesis; L-lysine biosynthesis via DAP pathway; (S)-tetrahydrodipicolinate from L-aspartate: step 3/4. Functionally, catalyzes the condensation of (S)-aspartate-beta-semialdehyde [(S)-ASA] and pyruvate to 4-hydroxy-tetrahydrodipicolinate (HTPA). This Thermus thermophilus (strain ATCC BAA-163 / DSM 7039 / HB27) protein is 4-hydroxy-tetrahydrodipicolinate synthase.